The sequence spans 393 residues: Serine/threonine protein kinase AFUB_078980 (393 aa).

In terms of domain architecture, Protein kinase spans Tyr-61–Leu-390. ATP is bound by residues Leu-67–Val-75 and Lys-90. Residue Asp-190 is the Proton acceptor of the active site.

This sequence belongs to the protein kinase superfamily. CMGC Ser/Thr protein kinase family.

It carries out the reaction L-seryl-[protein] + ATP = O-phospho-L-seryl-[protein] + ADP + H(+). It catalyses the reaction L-threonyl-[protein] + ATP = O-phospho-L-threonyl-[protein] + ADP + H(+). In terms of biological role, serine/threonine protein kinase; part of the subtelomeric hrmA-associated cluster (HAC) containing genes that alter the hyphal surface (such as reduced total chitin or increased beta-glucan exposure) and perturb inter-hyphal interactions within the developing biofilms, resulting in a loss of vertically aligned polarized growing filaments. Consequently, this hypoxia-typic morphotype (called H-MORPH) with altered biofilm architecture leads to increased hypoxia fitness, increased host inflammation, rapid disease progression, and mortality in a murine model of invasive aspergillosis. The chain is Serine/threonine protein kinase AFUB_078980 from Aspergillus fumigatus (strain CBS 144.89 / FGSC A1163 / CEA10) (Neosartorya fumigata).